Here is a 369-residue protein sequence, read N- to C-terminus: Putative FAD-dependent monooxygenase YetM (369 aa).

A signal peptide spans Met-1–Ala-32. FAD is bound by residues Gly-12, Glu-31–Ala-32, Val-126, and Asp-285.

The cofactor is FAD.

The chain is Putative FAD-dependent monooxygenase YetM (yetM) from Bacillus subtilis (strain 168).